Reading from the N-terminus, the 426-residue chain is C4-dicarboxylate transport protein (426 aa).

A run of 8 helical transmembrane segments spans residues 4–24 (SIFTSLYLQVLVAITIGILLG), 44–64 (LIKMIIAPVIFCTVVTGIAGM), 76–96 (IALLYFEVVSTIALIIGLVVV), 142–162 (IGAFASGNILQVLLFAVMFGF), 184–204 (VIFGVINMIMKLAPIGAFGAM), 222–242 (LILCFYITCALFVVLVLGSIA), 326–346 (IWHQVTLLVVLLLSSKGAAGV), and 352–372 (IVLAATLSAVGHLPVAGLALI).

This sequence belongs to the dicarboxylate/amino acid:cation symporter (DAACS) (TC 2.A.23) family.

The protein localises to the cell inner membrane. In terms of biological role, responsible for the transport of dicarboxylates such as succinate, fumarate, and malate from the periplasm across the membrane. The protein is C4-dicarboxylate transport protein of Edwardsiella ictaluri (strain 93-146).